The following is a 465-amino-acid chain: Argininosuccinate lyase (465 aa).

It belongs to the lyase 1 family. Argininosuccinate lyase subfamily.

It is found in the cytoplasm. It carries out the reaction 2-(N(omega)-L-arginino)succinate = fumarate + L-arginine. It functions in the pathway amino-acid biosynthesis; L-arginine biosynthesis; L-arginine from L-ornithine and carbamoyl phosphate: step 3/3. The polypeptide is Argininosuccinate lyase (Rhodopseudomonas palustris (strain HaA2)).